The sequence spans 278 residues: 3-methyl-2-oxobutanoate hydroxymethyltransferase (278 aa).

Mg(2+) is bound by residues aspartate 43 and aspartate 82. 3-methyl-2-oxobutanoate-binding positions include 43–44 (DS), aspartate 82, and lysine 112. Glutamate 114 contributes to the Mg(2+) binding site. The active-site Proton acceptor is the glutamate 181.

It belongs to the PanB family. Homodecamer; pentamer of dimers. The cofactor is Mg(2+).

The protein localises to the cytoplasm. It catalyses the reaction 3-methyl-2-oxobutanoate + (6R)-5,10-methylene-5,6,7,8-tetrahydrofolate + H2O = 2-dehydropantoate + (6S)-5,6,7,8-tetrahydrofolate. It participates in cofactor biosynthesis; (R)-pantothenate biosynthesis; (R)-pantoate from 3-methyl-2-oxobutanoate: step 1/2. Functionally, catalyzes the reversible reaction in which hydroxymethyl group from 5,10-methylenetetrahydrofolate is transferred onto alpha-ketoisovalerate to form ketopantoate. The polypeptide is 3-methyl-2-oxobutanoate hydroxymethyltransferase (Bacillus cereus (strain AH187)).